A 207-amino-acid chain; its full sequence is Ribosomal RNA small subunit methyltransferase G (207 aa).

S-adenosyl-L-methionine-binding positions include G73, L78, 124 to 125 (VE), and R139.

It belongs to the methyltransferase superfamily. RNA methyltransferase RsmG family.

It localises to the cytoplasm. It catalyses the reaction guanosine(527) in 16S rRNA + S-adenosyl-L-methionine = N(7)-methylguanosine(527) in 16S rRNA + S-adenosyl-L-homocysteine. Functionally, specifically methylates the N7 position of guanine in position 527 of 16S rRNA. In Shigella dysenteriae serotype 1 (strain Sd197), this protein is Ribosomal RNA small subunit methyltransferase G.